The following is a 115-amino-acid chain: Rubredoxin (115 aa).

In terms of domain architecture, Rubredoxin-like spans 15–66; that stretch reads SPNHECRACGYVYIPSQGDQKTSVSPGTPFEALPLNWKCPVCGAPRNYFIST. Positions 20, 23, 53, and 56 each coordinate Fe cation.

Belongs to the rubredoxin family. Fe(3+) serves as cofactor.

Rubredoxin is a small nonheme, iron protein lacking acid-labile sulfide. Its single Fe, chelated to 4 Cys, functions as an electron acceptor and may also stabilize the conformation of the molecule. Could be involved in hydrogenase-linked redox processes. This chain is Rubredoxin (rub), found in Synechocystis sp. (strain ATCC 27184 / PCC 6803 / Kazusa).